A 349-amino-acid polypeptide reads, in one-letter code: KH domain-containing, RNA-binding, signal transduction-associated protein 2 (349 aa).

Residues 65–135 (LIPVKQYPKF…HLSDELHVLI (71 aa)) enclose the KH domain. Disordered stretches follow at residues 182-284 (EDSG…DDQT) and 319-349 (PEEW…YGRY). An omega-N-methylarginine mark is found at Arg230 and Arg240. The segment covering 340–349 (GYREHPYGRY) has biased composition (basic and acidic residues).

The protein belongs to the KHDRBS family. Self-associates to form homooligomers. Interacts with KHDRBS1/SAM68; heterooligomer formation of KHDRBS family proteins may modulate RNA substrate specificity. Interacts with RBMX. Interacts with SAFB, SFRS9 and YTHDC1. Interacts with FYN and PLCG1 (via SH3 domain). Interacts (phosphorylated) with FYN, GRB2, PLCG1 and RASA1 (via SH2 domain). Post-translationally, methylated. Tyrosine phosphorylated by FYN, PTK6 and SRC. Tyrosine phosphorylated by SRC during mitosis. As to expression, highly expressed in brain, lung, kidney and small intestine. Weakly expressed in placenta, liver, spleen, thymus, ovary and colon.

The protein localises to the nucleus. Functionally, RNA-binding protein that plays a role in the regulation of alternative splicing and influences mRNA splice site selection and exon inclusion. Binds both poly(A) and poly(U) homopolymers. Phosphorylation by PTK6 inhibits its RNA-binding ability. Induces an increased concentration-dependent incorporation of exon in CD44 pre-mRNA by direct binding to purine-rich exonic enhancer. Can regulate alternative splicing of NRXN1 in the laminin G-like domain 6 containing the evolutionary conserved neurexin alternative spliced segment 4 (AS4) involved in neurexin selective targeting to postsynaptic partners. Regulates cell-type specific alternative splicing of NRXN1 at AS4 and acts synergystically with SAM68 in exon skipping. In contrast acts antagonistically with SAM68 in NRXN3 exon skipping at AS4. Its phosphorylation by FYN inhibits its ability to regulate splice site selection. May function as an adapter protein for Src kinases during mitosis. This chain is KH domain-containing, RNA-binding, signal transduction-associated protein 2 (KHDRBS2), found in Homo sapiens (Human).